The chain runs to 233 residues: tRNA (guanine-N(7)-)-methyltransferase (233 aa).

S-adenosyl-L-methionine-binding residues include E62, E87, D114, and D136. D136 is a catalytic residue. Residues K140, D172, and 211–214 (TRYE) contribute to the substrate site.

This sequence belongs to the class I-like SAM-binding methyltransferase superfamily. TrmB family.

It carries out the reaction guanosine(46) in tRNA + S-adenosyl-L-methionine = N(7)-methylguanosine(46) in tRNA + S-adenosyl-L-homocysteine. The protein operates within tRNA modification; N(7)-methylguanine-tRNA biosynthesis. Functionally, catalyzes the formation of N(7)-methylguanine at position 46 (m7G46) in tRNA. The polypeptide is tRNA (guanine-N(7)-)-methyltransferase (Erythrobacter litoralis (strain HTCC2594)).